A 215-amino-acid polypeptide reads, in one-letter code: HTH-type transcriptional repressor FabR (215 aa).

In terms of domain architecture, HTH tetR-type spans 10-70 (KTRRSLVEAA…TMVDESGLML (61 aa)). The segment at residues 33–52 (SLREVAREAGIAPTSFYRHF) is a DNA-binding region (H-T-H motif).

As to quaternary structure, homodimer.

The protein localises to the cytoplasm. In terms of biological role, represses the transcription of fabB, involved in unsaturated fatty acid (UFA) biosynthesis. By controlling UFA production, FabR directly influences the physical properties of the membrane bilayer. The chain is HTH-type transcriptional repressor FabR from Escherichia coli O139:H28 (strain E24377A / ETEC).